Reading from the N-terminus, the 267-residue chain is DNA repair protein RecO (267 aa).

The protein belongs to the RecO family.

Functionally, involved in DNA repair and RecF pathway recombination. The sequence is that of DNA repair protein RecO from Moorella thermoacetica (strain ATCC 39073 / JCM 9320).